The primary structure comprises 89 residues: Small ribosomal subunit protein uS15 (89 aa).

Belongs to the universal ribosomal protein uS15 family. Part of the 30S ribosomal subunit. Forms a bridge to the 50S subunit in the 70S ribosome, contacting the 23S rRNA.

Its function is as follows. One of the primary rRNA binding proteins, it binds directly to 16S rRNA where it helps nucleate assembly of the platform of the 30S subunit by binding and bridging several RNA helices of the 16S rRNA. Functionally, forms an intersubunit bridge (bridge B4) with the 23S rRNA of the 50S subunit in the ribosome. In Azorhizobium caulinodans (strain ATCC 43989 / DSM 5975 / JCM 20966 / LMG 6465 / NBRC 14845 / NCIMB 13405 / ORS 571), this protein is Small ribosomal subunit protein uS15.